Here is a 488-residue protein sequence, read N- to C-terminus: NADH-ubiquinone oxidoreductase chain 2 (488 aa).

Helical transmembrane passes span 4–24 (LFLAVFPEIFIINATFILLIH), 45–65 (WLGLLSVLITLLLLAAGAPLL), 84–104 (FCQILLLLSTAGTISMCFDFF), 111–131 (AFEFIVLILLSTCSMLFMISA), 134–154 (LIAMYLAIELQSLCFYVLAAS), 168–188 (YLILGAFSSGILLFGCSMIYG), 215–235 (IFMGILFIAVGFLFKITAVPF), 252–272 (AFLSIAPKISIFANILRVFIY), 282–302 (IFFFCSIASMILGALAAMAQT), 308–328 (LAYSSIGHVGYICIGFSCGTI), 334–354 (LLIGLFIYALTTINAFAIVLA), 375–395 (ILAITFSITMFSYAGIPPLAG), 400–420 (FYLFFAALGCGAYFLASVGVV), and 456–476 (LLLAMTSSFITLFFLYPSPLF).

It belongs to the complex I subunit 2 family.

It localises to the mitochondrion inner membrane. It carries out the reaction a ubiquinone + NADH + 5 H(+)(in) = a ubiquinol + NAD(+) + 4 H(+)(out). In terms of biological role, core subunit of the mitochondrial membrane respiratory chain NADH dehydrogenase (Complex I) that is believed to belong to the minimal assembly required for catalysis. Complex I functions in the transfer of electrons from NADH to the respiratory chain. The immediate electron acceptor for the enzyme is believed to be ubiquinone. This Oenothera berteroana (Bertero's evening primrose) protein is NADH-ubiquinone oxidoreductase chain 2 (ND2).